Here is a 507-residue protein sequence, read N- to C-terminus: Peroxisomal catalase (507 aa).

Active-site residues include His65 and Asn138. Tyr348 lines the heme pocket. Residues 505 to 507 (SKI) carry the Microbody targeting signal motif.

The protein belongs to the catalase family. Homotetramer. Heme serves as cofactor.

It localises to the peroxisome matrix. The catalysed reaction is 2 H2O2 = O2 + 2 H2O. Its function is as follows. Catalyzes the degradation of hydrogen peroxide (H(2)O(2)) generated by peroxisomal oxidases to water and oxygen, thereby protecting cells from the toxic effects of hydrogen peroxide. The protein is Peroxisomal catalase (PXP9) of Pichia angusta (Yeast).